We begin with the raw amino-acid sequence, 285 residues long: Taffazin (285 aa).

Over 1 to 23 the chain is Mitochondrial intermembrane; sequence MDSNNSNNNNKNLKQICDIPKPQ. Residues 24 to 42 lie within the membrane without spanning it; sequence FLSKGVFTLVGVLCKFWIS. The Mitochondrial intermembrane segment spans residues 43–285; the sequence is MNTVTTSGID…GRFSHPTIKD (243 aa). An HXXXXD motif motif is present at residues 74 to 79; sequence HSSNLD.

It belongs to the taffazin family.

Its subcellular location is the mitochondrion outer membrane. It is found in the mitochondrion inner membrane. The catalysed reaction is a 1-acyl-sn-glycero-3-phosphate + a 1,2-diacyl-sn-glycero-3-phospho-(1'-sn-glycerol) = 1-acyl-sn-glycero-3-phospho-(1'-sn-glycerol) + a 1,2-diacyl-sn-glycero-3-phosphate. It catalyses the reaction 1-hexadecanoyl-2-(9Z,12Z-octadecadienoyl)-sn-glycero-3-phospho-(1'-sn-glycerol) + 1-(9Z-octadecenoyl)-sn-glycero-3-phosphate = 1-(9Z)-octadecenoyl-2-(9Z,12Z)-octadecadienoyl-sn-glycero-3-phosphate + 1-hexadecanoyl-sn-glycero-3-phospho-(1'-sn-glycerol). The enzyme catalyses 1'-[1,2-diacyl-sn-glycero-3-phospho],3'-[1-acyl-sn-glycero-3-phospho]-glycerol + a 1,2-diacyl-sn-glycero-3-phosphocholine = a cardiolipin + a 1-acyl-sn-glycero-3-phosphocholine. It carries out the reaction 1-hexadecanoyl-2-(9Z,12Z-octadecadienoyl)-sn-glycero-3-phosphocholine + 1-hexadecanoyl-sn-glycero-3-phosphocholine = 2-(9Z,12Z-octadecadienoyl)-sn-glycero-3-phosphocholine + 1,2-dihexadecanoyl-sn-glycero-3-phosphocholine. The catalysed reaction is 1,2-di-(9Z-octadecenoyl)-sn-glycero-3-phosphocholine + 1-hexadecanoyl-sn-glycero-3-phosphocholine = 1-hexadecanoyl-2-(9Z-octadecenoyl)-sn-glycero-3-phosphocholine + 1-(9Z-octadecenoyl)-sn-glycero-3-phosphocholine. Its pathway is phospholipid metabolism. Functionally, acyltransferase required to remodel newly synthesized phospholipid cardiolipin (1',3'-bis-[1,2-diacyl-sn-glycero-3-phospho]-glycerol or CL), a key component of the mitochondrial inner membrane, with tissue specific acyl chains necessary for adequate mitochondrial function. Its role in cellular physiology is to improve mitochondrial performance. CL is critical for the coassembly of lipids and proteins in mitochondrial membranes, for instance, remodeling of the acyl groups of CL in the mitochondrial inner membrane affects the assembly and stability of respiratory chain complex IV and its supercomplex forms. Catalyzes the transacylation between phospholipids and lysophospholipids, with the highest rate being between phosphatidylcholine (1,2-diacyl-sn-glycero-3-phosphocholine or PC) and CL. Catalyzes both 1-acyl-sn-glycero-3-phosphocholine (lysophosphatidylcholine or LPC) reacylation and PC-CL transacylation, that means, it exchanges acyl groups between CL and PC by a combination of forward and reverse transacylations. Also catalyzes transacylations between other phospholipids such as phosphatidylethanolamine (1,2-diacyl-sn-glycero-3-phosphoethanolamine or PE) and CL, between PC and PE, and between PC and phosphatidate (1,2-diacyl-sn-glycero-3-phosphate or PA), although at lower rate. Not regiospecific, it transfers acyl groups into any of the sn-1 and sn-2 positions of the monolysocardiolipin (MLCL), which is an important prerequisite for uniformity and symmetry in CL acyl distribution. Cannot transacylate dilysocardiolipin (DLCL), thus, the role of MLCL is limited to that of an acyl acceptor. CoA-independent, it can reshuffle molecular species within a single phospholipid class. Redistributes fatty acids between MLCL, CL, and other lipids, which prolongs the half-life of CL. Its action is completely reversible, which allows for cyclic changes, such as fission and fusion or bending and flattening of the membrane. Hence, by contributing to the flexibility of the lipid composition, it plays an important role in the dynamics of mitochondria membranes. The polypeptide is Taffazin (taz) (Dictyostelium discoideum (Social amoeba)).